Reading from the N-terminus, the 295-residue chain is Probable porphobilinogen deaminase (295 aa).

Cysteine 234 is modified (S-(dipyrrolylmethanemethyl)cysteine).

Belongs to the HMBS family. It depends on dipyrromethane as a cofactor.

The enzyme catalyses 4 porphobilinogen + H2O = hydroxymethylbilane + 4 NH4(+). It functions in the pathway porphyrin-containing compound metabolism; protoporphyrin-IX biosynthesis; coproporphyrinogen-III from 5-aminolevulinate: step 2/4. Its function is as follows. Tetrapolymerization of the monopyrrole PBG into the hydroxymethylbilane pre-uroporphyrinogen in several discrete steps. The sequence is that of Probable porphobilinogen deaminase (hemC) from Thermoplasma acidophilum (strain ATCC 25905 / DSM 1728 / JCM 9062 / NBRC 15155 / AMRC-C165).